The primary structure comprises 286 residues: NH(3)-dependent NAD(+) synthetase (286 aa).

51-58 (GISGGVDS) lines the ATP pocket. Asp-57 contributes to the Mg(2+) binding site. A deamido-NAD(+)-binding site is contributed by Arg-148. ATP is bound at residue Thr-168. Glu-173 contacts Mg(2+). 2 residues coordinate deamido-NAD(+): Lys-181 and Asp-188. Residues Lys-197 and Thr-219 each contribute to the ATP site. Residue 268–269 (HK) participates in deamido-NAD(+) binding.

It belongs to the NAD synthetase family. As to quaternary structure, homodimer.

It carries out the reaction deamido-NAD(+) + NH4(+) + ATP = AMP + diphosphate + NAD(+) + H(+). It participates in cofactor biosynthesis; NAD(+) biosynthesis; NAD(+) from deamido-NAD(+) (ammonia route): step 1/1. Its function is as follows. Catalyzes the ATP-dependent amidation of deamido-NAD to form NAD. Uses ammonia as a nitrogen source. This Paraburkholderia phytofirmans (strain DSM 17436 / LMG 22146 / PsJN) (Burkholderia phytofirmans) protein is NH(3)-dependent NAD(+) synthetase.